Consider the following 186-residue polypeptide: Peptidyl-tRNA hydrolase (186 aa).

Residue Tyr14 participates in tRNA binding. Catalysis depends on His19, which acts as the Proton acceptor. TRNA-binding residues include Tyr61, Asn63, and Asn107.

It belongs to the PTH family. Monomer.

It localises to the cytoplasm. It catalyses the reaction an N-acyl-L-alpha-aminoacyl-tRNA + H2O = an N-acyl-L-amino acid + a tRNA + H(+). Hydrolyzes ribosome-free peptidyl-tRNAs (with 1 or more amino acids incorporated), which drop off the ribosome during protein synthesis, or as a result of ribosome stalling. In terms of biological role, catalyzes the release of premature peptidyl moieties from peptidyl-tRNA molecules trapped in stalled 50S ribosomal subunits, and thus maintains levels of free tRNAs and 50S ribosomes. This is Peptidyl-tRNA hydrolase from Helicobacter pylori (strain Shi470).